Here is a 135-residue protein sequence, read N- to C-terminus: Large ribosomal subunit protein eL27 (135 aa).

The protein belongs to the eukaryotic ribosomal protein eL27 family.

This chain is Large ribosomal subunit protein eL27 (RPL27), found in Pisum sativum (Garden pea).